A 341-amino-acid polypeptide reads, in one-letter code: Fructose-1,6-bisphosphatase class 1 1 (341 aa).

4 residues coordinate Mg(2+): Glu92, Asp114, Leu116, and Asp117. Residues 117-120 (DGSS), Asn209, and Lys275 each bind substrate. Residue Glu281 participates in Mg(2+) binding.

This sequence belongs to the FBPase class 1 family. Homotetramer. Requires Mg(2+) as cofactor.

The protein localises to the cytoplasm. It catalyses the reaction beta-D-fructose 1,6-bisphosphate + H2O = beta-D-fructose 6-phosphate + phosphate. It participates in carbohydrate biosynthesis; gluconeogenesis. The sequence is that of Fructose-1,6-bisphosphatase class 1 1 from Leptothrix cholodnii (strain ATCC 51168 / LMG 8142 / SP-6) (Leptothrix discophora (strain SP-6)).